Here is a 222-residue protein sequence, read N- to C-terminus: Vacuolar protein sorting-associated protein 2 homolog 2 (222 aa).

Coiled-coil stretches lie at residues 26–83 (RGIE…AQIR) and 143–222 (SEAI…LRRI). The disordered stretch occupies residues 179-222 (SSAPKGRIATKTAAPPASTAATNKNSESSEVDELEKRLASLRRI). Over residues 187-203 (ATKTAAPPASTAATNKN) the composition is skewed to low complexity.

The protein belongs to the SNF7 family. Component of the endosomal sorting required for transport complex III (ESCRT-III), composed at least of VPS2, VPS20, VPS24 and VPS32. Interacts with CHMP1A, CHMP1B and VPS60-1.

It localises to the endosome. In terms of biological role, component of the ESCRT-III complex, which is required for multivesicular bodies (MVBs) formation and sorting of endosomal cargo proteins into MVBs. The ESCRT-III complex is probably involved in the concentration of MVB cargo. The chain is Vacuolar protein sorting-associated protein 2 homolog 2 (VPS2.2) from Arabidopsis thaliana (Mouse-ear cress).